We begin with the raw amino-acid sequence, 337 residues long: Probable E3 ubiquitin-protein ligase LUL1 (337 aa).

The N-myristoyl glycine moiety is linked to residue Gly-2. Positions 139–255 (FTFDASMPGR…GEIKIEVVKQ (117 aa)) are DAR2 domain. The RING-type; atypical zinc finger occupies 285–324 (CVVCLSEPRDTTVLPCRHMCMCSGCAKALRFQTNLCPVCR).

It belongs to the RING-type zinc finger family. LOG2 subfamily. Myristoylated (in vitro).

It catalyses the reaction S-ubiquitinyl-[E2 ubiquitin-conjugating enzyme]-L-cysteine + [acceptor protein]-L-lysine = [E2 ubiquitin-conjugating enzyme]-L-cysteine + N(6)-ubiquitinyl-[acceptor protein]-L-lysine.. The protein operates within protein modification; protein ubiquitination. Its function is as follows. Acts as an E3 ubiquitin-protein ligase, or as part of E3 complex, which accepts ubiquitin from specific E2 ubiquitin-conjugating enzymes and then transfers it to substrates (in vitro). The sequence is that of Probable E3 ubiquitin-protein ligase LUL1 (LUL1) from Arabidopsis thaliana (Mouse-ear cress).